The following is a 485-amino-acid chain: Ulvan lyase (485 aa).

The signal sequence occupies residues 1-33; sequence MIRNDTMLKGQFVLKKTQIALSAALMGSVLLTG. The N-palmitoyl cysteine moiety is linked to residue C34. The S-diacylglycerol cysteine moiety is linked to residue C34. N64 and N126 together coordinate substrate. Residues 108 to 128 form a disordered region; the sequence is FKAGTSELGRRDGGKKFDNHG. The span at 115-128 shows a compositional bias: basic and acidic residues; it reads LGRRDGGKKFDNHG. H127 functions as the Proton donor in the catalytic mechanism. Substrate-binding residues include K129 and H147. Y192 functions as the Proton acceptor in the catalytic mechanism. Positions 208, 212, and 250 each coordinate substrate. Zn(2+) is bound at residue H212. Positions 268, 270, and 282 each coordinate Zn(2+). H282 contributes to the substrate binding site.

Belongs to the polysaccharide lyase 25 family.

The protein localises to the cell membrane. Its function is as follows. Ulvan lyase involved in ulvan degradation. Ulvan is the main polysaccharide component of the Ulvales (green seaweed) cell wall. It is composed of disaccharide building blocks comprising 3-sulfated rhamnose (Rha3S) linked to D-glucuronic acid (GlcA), L-iduronic acid (IduA), or D-xylose (Xyl). Ulvan lyase catalyzes the endolytic cleavage of the glycosidic bond between Rha3S and the uronic acids GlcA or IduA, producing oligosaccharides that have unsaturated 4-deoxy-L-threo-hex-4-enopyranosiduronic acid (deltaUA) at the non-reducing end. This results eventually in the degradation of the ulvan polysaccharide into deltaUA-Rha3S disaccharides and deltaUA-Rha3S-Xyl-Rha3S tetrasaccharides. The protein is Ulvan lyase of Alteromonas sp. (strain LOR).